Reading from the N-terminus, the 82-residue chain is Immediate early response 3-interacting protein 1 (82 aa).

2 consecutive transmembrane segments (helical) span residues 2–22 (AFTLYSLMQAALLCVNAIAVL) and 62–82 (VMRVPLIIVNSITIVLLLLFG).

It belongs to the YOS1 family.

Its subcellular location is the endoplasmic reticulum membrane. Functionally, regulator of endoplasmic reticulum secretion that acts as a key determinant of brain size. Required for secretion of extracellular matrix proteins. Required for correct brain development by depositing sufficient extracellular matrix proteins for tissue integrity and the proliferation of neural progenitors. Acts as a regulator of the unfolded protein response (UPR). In Rattus norvegicus (Rat), this protein is Immediate early response 3-interacting protein 1.